A 20-amino-acid polypeptide reads, in one-letter code: Protein PR-L6 (20 aa).

Belongs to the BetVI family.

This chain is Protein PR-L6, found in Lupinus luteus (European yellow lupine).